A 223-amino-acid chain; its full sequence is UPF0441 protein KPK_0672 (223 aa).

Positions 165–223 (SYGAAQPGRTMNVPKTAMAPKPATTTTVTRGGFGESVAKQSTMQRSAAGSTSSSRSMGG) are disordered. Composition is skewed to low complexity over residues 177–193 (VPKT…TTVT) and 209–223 (RSAA…SMGG).

This sequence belongs to the UPF0441 family.

This Klebsiella pneumoniae (strain 342) protein is UPF0441 protein KPK_0672.